The following is a 749-amino-acid chain: Dynamin-1-like protein (749 aa).

Methionine 1 bears the N-acetylmethionine mark. The 294-residue stretch at 22 to 315 (IIQLPQIVVV…LMHHIRDCLP (294 aa)) folds into the Dynamin-type G domain. Positions 32-39 (GTQSSGKS) are G1 motif. 32 to 40 (GTQSSGKSS) contributes to the GTP binding site. The segment at 58 to 60 (VTR) is G2 motif. A disordered region spans residues 74 to 93 (DKRKTTGEENDPATWKNSRH). The G3 motif stretch occupies residues 159–162 (DLPG). The segment at 228–231 (TKLD) is G4 motif. GTP contacts are provided by residues 228 to 234 (TKLDLMD) and 259 to 262 (NRSQ). Residues 258-261 (VNRS) form a G5 motif region. Residues 357 to 502 (YCNTIEGTAK…NEMVHNLVAI (146 aa)) form a middle domain region. The segment at 461–698 (NYSTQELLRF…NHVKDTLQSE (238 aa)) is interaction with GSK3B. The tract at residues 515-582 (ADACGLMNNN…IQESRRETKN (68 aa)) is b domain. The segment at 536 to 604 (ELPSAVSRDK…QEPTTGNWRG (69 aa)) is disordered. Serine 542 carries the phosphoserine modification. Residues lysine 545 and lysine 548 each participate in a glycyl lysine isopeptide (Lys-Gly) (interchain with G-Cter in SUMO) cross-link. Over residues 550 to 567 (PSALAPASQEPSPAASAE) the composition is skewed to low complexity. Serine 561 is modified (phosphoserine). Basic and acidic residues predominate over residues 568–581 (ADGKLIQESRRETK). Residues lysine 571 and lysine 581 each participate in a glycyl lysine isopeptide (Lys-Gly) (interchain with G-Cter in SUMO) cross-link. O-linked (GlcNAc) threonine glycans are attached at residues threonine 598 and threonine 599. Residue lysine 607 forms a Glycyl lysine isopeptide (Lys-Gly) (interchain with G-Cter in SUMO) linkage. Lysine 610 bears the N6-acetyllysine; alternate mark. Lysine 610 is covalently cross-linked (Glycyl lysine isopeptide (Lys-Gly) (interchain with G-Cter in SUMO); alternate). Lysine 619 participates in a covalent cross-link: Glycyl lysine isopeptide (Lys-Gly) (interchain with G-Cter in SUMO). A Phosphoserine modification is found at serine 620. Lysine 621 is covalently cross-linked (Glycyl lysine isopeptide (Lys-Gly) (interchain with G-Cter in SUMO)). Serine 629 bears the Phosphoserine; by CDK1 and PINK1 mark. Serine 650 carries the phosphoserine; by CAMK1 and PKA modification. An S-nitrosocysteine modification is found at cysteine 657. The region spanning 657-748 (CEVIERLIKS…IIAEIRETHL (92 aa)) is the GED domain. The segment at 667–681 (YFLIVRKNIQDSVPK) is important for homodimerization.

Belongs to the TRAFAC class dynamin-like GTPase superfamily. Dynamin/Fzo/YdjA family. As to quaternary structure, homotetramer; dimerizes through the N-terminal GTP-middle region of one molecule binding to the GED domain of another DNM1L molecule. Oligomerizes in a GTP-dependent manner to form membrane-associated tubules with a spiral pattern. Interacts with GSK3B and MARCHF5. Interacts (via the GTPase and B domains) with UBE2I; the interaction promotes sumoylation of DNM1L, mainly in its B domain. Interacts with PPP3CA; the interaction dephosphorylates DNM1L and regulates its transition to mitochondria. Interacts with BCL2L1 isoform BCL-X(L) and CLTA; DNM1L and BCL2L1 isoform BCL-X(L) may form a complex in synaptic vesicles that also contains clathrin and MFF. Interacts with MFF; the interaction is inhinited by C11orf65/MFI. Interacts with FIS1. Interacts with MIEF2 and MIEF1; GTP-dependent, regulates GTP hydrolysis and DNM1L oligomerization. Interacts with PGAM5; this interaction leads to dephosphorylation at Ser-656 and activation of GTPase activity and eventually to mitochondria fragmentation. Interacts with RALBP1; during mitosis, recruits DNM1L to the mitochondrion and mediates its activation by the mitotic kinase cyclin B-CDK1. In terms of processing, phosphorylation/dephosphorylation events on two sites near the GED domain regulate mitochondrial fission. Phosphorylation on Ser-650 by CAMK1 and PKA inhibits the GTPase activity, leading to a defect in mitochondrial fission promoting mitochondrial elongation. Dephosphorylated on this site by PPP3CA which promotes mitochondrial fission. Phosphorylation on Ser-629 by CDK1 and PINK1 activates the GTPase activity and promotes mitochondrial fission. Phosphorylated in a circadian manner at Ser-650. Sumoylated on various lysine residues within the B domain, probably by MUL1. Sumoylation positively regulates mitochondrial fission. Desumoylated by SENP5 during G2/M transition of mitosis. Appears to be linked to its catalytic activity. Post-translationally, S-nitrosylation increases DNM1L dimerization, mitochondrial fission and causes neuronal damage. In terms of processing, O-GlcNAcylation augments the level of the GTP-bound active form of DNM1L and induces translocation from the cytoplasm to mitochondria in cardiomyocytes. It also decreases phosphorylation at Ser-650. Ubiquitination by MARCHF5 affects mitochondrial morphology.

Its subcellular location is the cytoplasm. The protein localises to the cytosol. It localises to the golgi apparatus. It is found in the endomembrane system. The protein resides in the mitochondrion outer membrane. Its subcellular location is the peroxisome. The protein localises to the membrane. It localises to the clathrin-coated pit. It is found in the cytoplasmic vesicle. The protein resides in the secretory vesicle. Its subcellular location is the synaptic vesicle membrane. The enzyme catalyses GTP + H2O = GDP + phosphate + H(+). Functionally, functions in mitochondrial and peroxisomal division. Mediates membrane fission through oligomerization into membrane-associated tubular structures that wrap around the scission site to constrict and sever the mitochondrial membrane through a GTP hydrolysis-dependent mechanism. The specific recruitment at scission sites is mediated by membrane receptors like MFF, MIEF1 and MIEF2 for mitochondrial membranes. While the recruitment by the membrane receptors is GTP-dependent, the following hydrolysis of GTP induces the dissociation from the receptors and allows DNM1L filaments to curl into closed rings that are probably sufficient to sever a double membrane. Acts downstream of PINK1 to promote mitochondrial fission in a PRKN-dependent manner. Plays an important role in mitochondrial fission during mitosis. Through its function in mitochondrial division, ensures the survival of at least some types of postmitotic neurons, including Purkinje cells, by suppressing oxidative damage. Required for normal brain development, including that of cerebellum. Facilitates developmentally regulated apoptosis during neural tube formation. Required for a normal rate of cytochrome c release and caspase activation during apoptosis; this requirement may depend upon the cell type and the physiological apoptotic cues. Required for formation of endocytic vesicles. Proposed to regulate synaptic vesicle membrane dynamics through association with BCL2L1 isoform Bcl-X(L) which stimulates its GTPase activity in synaptic vesicles; the function may require its recruitment by MFF to clathrin-containing vesicles. Required for programmed necrosis execution. Rhythmic control of its activity following phosphorylation at Ser-650 is essential for the circadian control of mitochondrial ATP production. This Bos taurus (Bovine) protein is Dynamin-1-like protein.